We begin with the raw amino-acid sequence, 363 residues long: Serpentine receptor class T-55 (363 aa).

A signal peptide spans 1-18; it reads MKLRHFLIFLMLIPISSS. 7 helical membrane-spanning segments follow: residues 70-90, 107-127, 143-163, 187-207, 231-251, 278-298, and 303-323; these read IYYISSGLFFQLIGWPVIWVF, VFIGLIEITEIWGNSVFPGFV, IVGKMTMVQWVLGSSSAAFLG, WLTVLFFYACYGSIFFDTVLF, FLYFHNIIVATTLILVYACLC, ICISLTYAIPAISFVTMFVLP, and FFHVSDITYQLSGGLPFIMYI.

It belongs to the nematode receptor-like protein srt family.

Its subcellular location is the membrane. The polypeptide is Serpentine receptor class T-55 (srt-55) (Caenorhabditis elegans).